Reading from the N-terminus, the 612-residue chain is Adherence factor (612 aa).

6 stretches are compositionally biased toward low complexity: residues 1–18, 47–68, 94–106, 115–141, 182–203, and 218–228; these read MSSF…NLSS, SSMM…QQQQ, LQTQ…SATT, YNQQ…NNMQ, QSAQ…QPRS, and SRQVSGSGRST. Disordered regions lie at residues 1-20, 46-68, 94-143, 179-273, 443-480, 497-527, and 546-612; these read MSSF…SSFQ, ASSM…QQQQ, LQTQ…MQFF, PQLQ…NNNK, KEKK…NTNN, SQLM…LSNN, and SQEQ…KQFY. Positions 230–240 are enriched in polar residues; the sequence is AKKQSAITSGS. Positions 254-272 are enriched in low complexity; the sequence is TSVANSTSTTTMTTTNNNN. Residues 443-457 show a composition bias toward basic and acidic residues; the sequence is KEKKLTEKTIEQREQ. Composition is skewed to polar residues over residues 465-480 and 497-512; these read ANHS…NTNN and SQLM…ATKI. Positions 555-571 are enriched in basic residues; the sequence is NQHHHNHQQHPLIHHHQ. Residues 585–606 are compositionally biased toward low complexity; the sequence is PSTIPTSSLSIQQQQQQQQQQL.

In terms of biological role, surface antigen mediating adhesion and aggregation in S.cerevisiae. The protein is Adherence factor (ADF1) of Candida albicans (strain SC5314 / ATCC MYA-2876) (Yeast).